The sequence spans 379 residues: Homoserine O-acetyltransferase (379 aa).

The AB hydrolase-1 domain occupies 52 to 356 (NVVVVLHALT…VYGHDGFLVE (305 aa)). S157 (nucleophile) is an active-site residue. R227 is a binding site for substrate. Catalysis depends on residues D320 and H350. D351 is a binding site for substrate.

Belongs to the AB hydrolase superfamily. MetX family. As to quaternary structure, homodimer.

The protein localises to the cytoplasm. The catalysed reaction is L-homoserine + acetyl-CoA = O-acetyl-L-homoserine + CoA. Its pathway is amino-acid biosynthesis; L-methionine biosynthesis via de novo pathway; O-acetyl-L-homoserine from L-homoserine: step 1/1. Functionally, transfers an acetyl group from acetyl-CoA to L-homoserine, forming acetyl-L-homoserine. The polypeptide is Homoserine O-acetyltransferase (Mycobacterium tuberculosis (strain CDC 1551 / Oshkosh)).